We begin with the raw amino-acid sequence, 149 residues long: Deoxyuridine 5'-triphosphate nucleotidohydrolase (149 aa).

Residues 68–70, Asn-81, and 85–87 contribute to the substrate site; these read RSG and LID.

This sequence belongs to the dUTPase family. It depends on Mg(2+) as a cofactor.

The enzyme catalyses dUTP + H2O = dUMP + diphosphate + H(+). The protein operates within pyrimidine metabolism; dUMP biosynthesis; dUMP from dCTP (dUTP route): step 2/2. Its function is as follows. This enzyme is involved in nucleotide metabolism: it produces dUMP, the immediate precursor of thymidine nucleotides and it decreases the intracellular concentration of dUTP so that uracil cannot be incorporated into DNA. The sequence is that of Deoxyuridine 5'-triphosphate nucleotidohydrolase from Azoarcus sp. (strain BH72).